The following is a 458-amino-acid chain: Monomethylamine methyltransferase MtmB (458 aa).

A non-standard amino acid (pyrrolysine) is located at residue pyrrolysine 202.

The protein belongs to the monomethylamine methyltransferase family. As to quaternary structure, can form a complex with MtmC.

The catalysed reaction is Co(I)-[methylamine-specific corrinoid protein] + methylamine + H(+) = methyl-Co(III)-[methylamine-specific corrinoid protein] + NH4(+). Its pathway is one-carbon metabolism; methanogenesis from methylamine. Catalyzes the transfer of the methyl group from monomethylamine to the corrinoid cofactor of MtmC. This is Monomethylamine methyltransferase MtmB (mtmB1) from Methanosarcina mazei (strain ATCC BAA-159 / DSM 3647 / Goe1 / Go1 / JCM 11833 / OCM 88) (Methanosarcina frisia).